We begin with the raw amino-acid sequence, 529 residues long: F-box/LRR-repeat protein At5g63520 (529 aa).

The segment at 1–22 is disordered; it reads MAEVSLTKKEMTTKGKSENSKK. The F-box domain maps to 31–78; the sequence is VPIAAMNEDLLHNILLRLPAKSFAFASCVNRFWSSVCNRILSRPKMIS. 2 LRR repeats span residues 265–288 and 418–441; these read GNEPRNVQLQKDDIRVLAGLIFAR and QVYLPDLKVAEAALNDVSAQLRNL.

The polypeptide is F-box/LRR-repeat protein At5g63520 (Arabidopsis thaliana (Mouse-ear cress)).